The following is a 414-amino-acid chain: 3-oxo-isoapionate-4-phosphate transcarboxylase/hydrolase (414 aa).

Residues Lys-180, Asp-182, and Glu-183 each contribute to the Mg(2+) site. Residue Lys-180 is modified to N6-carboxylysine.

The protein belongs to the RuBisCO large chain family. Requires Mg(2+) as cofactor.

It carries out the reaction 3-oxoisoapionate 4-phosphate + H2O = (2R)-3-phosphoglycerate + glycolate + H(+). It participates in carbohydrate metabolism. Its function is as follows. Involved in catabolism of D-apiose. Catalyzes the conversion of 3-oxo-isoapionate 4-phosphate to 3-phosphoglycerate and glycolate. In Xanthobacter autotrophicus (strain ATCC BAA-1158 / Py2), this protein is 3-oxo-isoapionate-4-phosphate transcarboxylase/hydrolase.